The following is a 309-amino-acid chain: Coproporphyrin III ferrochelatase (309 aa).

Fe-coproporphyrin III contacts are provided by residues Y12, R29, 45–46, S53, and Y124; that span reads RY. Residues H182 and E263 each coordinate Fe(2+).

This sequence belongs to the ferrochelatase family.

It localises to the cytoplasm. The enzyme catalyses Fe-coproporphyrin III + 2 H(+) = coproporphyrin III + Fe(2+). It functions in the pathway porphyrin-containing compound metabolism; protoheme biosynthesis. Involved in coproporphyrin-dependent heme b biosynthesis. Catalyzes the insertion of ferrous iron into coproporphyrin III to form Fe-coproporphyrin III. This Listeria innocua serovar 6a (strain ATCC BAA-680 / CLIP 11262) protein is Coproporphyrin III ferrochelatase.